A 101-amino-acid polypeptide reads, in one-letter code: Citrate lyase acyl carrier protein (101 aa).

Ser14 is subject to O-(phosphoribosyl dephospho-coenzyme A)serine.

The protein belongs to the CitD family. Oligomer with a subunit composition of (alpha,beta,gamma)6.

The protein localises to the cytoplasm. Its function is as follows. Covalent carrier of the coenzyme of citrate lyase. The polypeptide is Citrate lyase acyl carrier protein (Latilactobacillus sakei subsp. sakei (strain 23K) (Lactobacillus sakei subsp. sakei)).